A 170-amino-acid chain; its full sequence is NADPH-dependent 7-cyano-7-deazaguanine reductase (170 aa).

Residue Cys-58 is the Thioimide intermediate of the active site. The active-site Proton donor is Asp-65. Substrate-binding positions include 80–82 (VES) and 99–100 (HE).

It belongs to the GTP cyclohydrolase I family. QueF type 1 subfamily.

Its subcellular location is the cytoplasm. The enzyme catalyses 7-aminomethyl-7-carbaguanine + 2 NADP(+) = 7-cyano-7-deazaguanine + 2 NADPH + 3 H(+). Its pathway is tRNA modification; tRNA-queuosine biosynthesis. Its function is as follows. Catalyzes the NADPH-dependent reduction of 7-cyano-7-deazaguanine (preQ0) to 7-aminomethyl-7-deazaguanine (preQ1). The protein is NADPH-dependent 7-cyano-7-deazaguanine reductase of Bdellovibrio bacteriovorus (strain ATCC 15356 / DSM 50701 / NCIMB 9529 / HD100).